The chain runs to 65 residues: UPF0434 protein Rpal_0270 (65 aa).

The protein belongs to the UPF0434 family.

The sequence is that of UPF0434 protein Rpal_0270 from Rhodopseudomonas palustris (strain TIE-1).